Here is a 358-residue protein sequence, read N- to C-terminus: SPbeta prophage-derived probable integrase/recombinase YopP (358 aa).

The 92-residue stretch at 23-114 (NKDIRSSSGN…SLKMLYTYLE (92 aa)) folds into the Core-binding (CB) domain. The 183-residue stretch at 137–319 (KNWDKTTQTE…NIANSAGVTM (183 aa)) folds into the Tyr recombinase domain. Catalysis depends on residues Arg178, Lys206, His268, and His295. Tyr304 acts as the O-(3'-phospho-DNA)-tyrosine intermediate in catalysis.

Belongs to the 'phage' integrase family.

In terms of biological role, probable recombinase that does not seem to have a role in chromosome dimer resolution per se but rather may have some facilitative role during chromosome partitioning in general. The sequence is that of SPbeta prophage-derived probable integrase/recombinase YopP (yopP) from Bacillus subtilis (strain 168).